The sequence spans 329 residues: Beta-tectorin (329 aa).

Residues 1–17 (MVTKAFVLLAIFAEASA) form the signal peptide. In terms of domain architecture, ZP spans 19-283 (SCAPNKADVI…LSCPVTCDKR (265 aa)). 4 N-linked (GlcNAc...) asparagine glycosylation sites follow: Asn80, Asn104, Asn116, and Asn145. A disulfide bridge connects residues Cys204 and Cys264. The GPI-anchor amidated glycine moiety is linked to residue Gly305. Residues 306-329 (FSSLYSFSDVLHHLIMMLGICAVL) constitute a propeptide, removed in mature form.

In terms of assembly, may form homomeric filament after self-association or heteromeric filament after association with alpha-tectorin. Interacts with CEACAM16. The presence of a hydrophobic C-terminus preceded by a potential cleavage site strongly suggests that tectorins are synthesized as glycosylphosphatidylinositol-linked, membrane-bound precursors. Tectorins are targeted to the apical surface of the inner ear epithelia by the lipid and proteolytically released into the extracellular compartment.

The protein resides in the cell membrane. It is found in the secreted. The protein localises to the extracellular space. Its subcellular location is the extracellular matrix. Its function is as follows. One of the major non-collagenous components of the tectorial membrane. The tectorial membrane is an extracellular matrix of the inner ear that covers the neuroepithelium of the cochlea and contacts the stereocilia bundles of specialized sensory hair cells. Sound induces movement of these hair cells relative to the tectorial membrane, deflects the stereocilia and leads to fluctuations in hair-cell membrane potential, transducing sound into electrical signals. In Homo sapiens (Human), this protein is Beta-tectorin (TECTB).